Reading from the N-terminus, the 276-residue chain is Formamidopyrimidine-DNA glycosylase (276 aa).

Catalysis depends on proline 2, which acts as the Schiff-base intermediate with DNA. Glutamate 3 (proton donor) is an active-site residue. Catalysis depends on lysine 59, which acts as the Proton donor; for beta-elimination activity. DNA contacts are provided by histidine 93, arginine 112, and arginine 155. The FPG-type zinc-finger motif lies at 240-274 (QVYNREGKPCPRCGDKIAKKKVGGRSSYYCPTCQK). The Proton donor; for delta-elimination activity role is filled by arginine 264.

This sequence belongs to the FPG family. Monomer. Zn(2+) serves as cofactor.

The catalysed reaction is Hydrolysis of DNA containing ring-opened 7-methylguanine residues, releasing 2,6-diamino-4-hydroxy-5-(N-methyl)formamidopyrimidine.. The enzyme catalyses 2'-deoxyribonucleotide-(2'-deoxyribose 5'-phosphate)-2'-deoxyribonucleotide-DNA = a 3'-end 2'-deoxyribonucleotide-(2,3-dehydro-2,3-deoxyribose 5'-phosphate)-DNA + a 5'-end 5'-phospho-2'-deoxyribonucleoside-DNA + H(+). Involved in base excision repair of DNA damaged by oxidation or by mutagenic agents. Acts as a DNA glycosylase that recognizes and removes damaged bases. Has a preference for oxidized purines, such as 7,8-dihydro-8-oxoguanine (8-oxoG). Has AP (apurinic/apyrimidinic) lyase activity and introduces nicks in the DNA strand. Cleaves the DNA backbone by beta-delta elimination to generate a single-strand break at the site of the removed base with both 3'- and 5'-phosphates. This Pelotomaculum thermopropionicum (strain DSM 13744 / JCM 10971 / SI) protein is Formamidopyrimidine-DNA glycosylase.